A 632-amino-acid chain; its full sequence is DNA ligase (632 aa).

NAD(+)-binding positions include 45-49 (NEDYD) and 89-90 (SI). The active-site N6-AMP-lysine intermediate is K127. NAD(+) is bound by residues R143, E174, and K286. C374, C377, C390, and C396 together coordinate Zn(2+). The BRCT domain occupies 561 to 632 (DKRIVFTGKM…EADYLSKITM (72 aa)).

It belongs to the NAD-dependent DNA ligase family. LigA subfamily. Mg(2+) is required as a cofactor. The cofactor is Mn(2+).

The enzyme catalyses NAD(+) + (deoxyribonucleotide)n-3'-hydroxyl + 5'-phospho-(deoxyribonucleotide)m = (deoxyribonucleotide)n+m + AMP + beta-nicotinamide D-nucleotide.. In terms of biological role, DNA ligase that catalyzes the formation of phosphodiester linkages between 5'-phosphoryl and 3'-hydroxyl groups in double-stranded DNA using NAD as a coenzyme and as the energy source for the reaction. It is essential for DNA replication and repair of damaged DNA. The polypeptide is DNA ligase (Vesicomyosocius okutanii subsp. Calyptogena okutanii (strain HA)).